Here is a 207-residue protein sequence, read N- to C-terminus: Uridine kinase (207 aa).

13 to 20 (GASGSGKT) lines the ATP pocket.

The protein belongs to the uridine kinase family.

The protein resides in the cytoplasm. The enzyme catalyses uridine + ATP = UMP + ADP + H(+). It carries out the reaction cytidine + ATP = CMP + ADP + H(+). Its pathway is pyrimidine metabolism; CTP biosynthesis via salvage pathway; CTP from cytidine: step 1/3. The protein operates within pyrimidine metabolism; UMP biosynthesis via salvage pathway; UMP from uridine: step 1/1. The chain is Uridine kinase from Ureaplasma parvum serovar 3 (strain ATCC 27815 / 27 / NCTC 11736).